The sequence spans 266 residues: Protein phosphatase 1 regulatory subunit 35 (266 aa).

Polar residues predominate over residues 1–10 (MMVYNGSQLE). The segment at 1 to 118 (MMVYNGSQLE…QDLGTPVQQS (118 aa)) is disordered. Over residues 21–38 (PGPPPEPRAPEPGAPVPE) the composition is skewed to pro residues. Residues Ser46 and Ser51 each carry the phosphoserine modification. Over residues 62–79 (GRRKGRADRRGGARKGRQ) the composition is skewed to basic residues. Over residues 86–97 (PPSPVRSGPPPA) the composition is skewed to pro residues.

It belongs to the PPP1R35 family. As to quaternary structure, interacts with PPP1CA; this interaction mediates the PPP1CA phosphatase activity inhibition. Interacts with RTTN; this interaction allows the mutual recruitment to the centriole.

Its subcellular location is the cytoplasm. It is found in the cytoskeleton. The protein resides in the microtubule organizing center. The protein localises to the centrosome. It localises to the centriole. Functionally, during centriole duplication, plays a role in the centriole elongation by promoting the recruitment of the microtubule-binding elongation machinery through its interaction with RTTN, leading to the centriole to centrosome conversion. In addition may play a role in the primary cilia assembly. The chain is Protein phosphatase 1 regulatory subunit 35 from Bos taurus (Bovine).